The following is a 357-amino-acid chain: Arginine kinase Pro c 2.0101 (357 aa).

Residues Lys9–Lys91 enclose the Phosphagen kinase N-terminal domain. L-arginine is bound at residue Gly64–Tyr68. Positions Phe119 to Met356 constitute a Phosphagen kinase C-terminal domain. ATP-binding positions include Ser122–Arg126 and His185. Residue Glu225 participates in L-arginine binding. Arg229 contacts ATP. Cys271 is a binding site for L-arginine. Residues Arg280 to His284 and Arg309 to Glu314 each bind ATP. Glu314 contacts L-arginine.

This sequence belongs to the ATP:guanido phosphotransferase family. Post-translationally, glycosylated. As to expression, muscle (at protein level).

It catalyses the reaction L-arginine + ATP = N(omega)-phospho-L-arginine + ADP + H(+). In terms of biological role, catalyzes the reversible transfer of high energy ATP gamma-phosphate group to L-arginine. The sequence is that of Arginine kinase Pro c 2.0101 from Procambarus clarkii (Red swamp crayfish).